We begin with the raw amino-acid sequence, 697 residues long: Tryptophan synthase (697 aa).

The tryptophan synthase alpha chain stretch occupies residues 1 to 298 (MTEQIKKTFL…AVVEPINEMY (298 aa)). Catalysis depends on proton acceptor residues E50 and D61. Positions 298–697 (YLPQKYGMFG…GPKIGWDLRF (400 aa)) are tryptophan synthase beta chain. At K381 the chain carries N6-(pyridoxal phosphate)lysine.

In the N-terminal section; belongs to the TrpA family. It in the C-terminal section; belongs to the TrpB family. Requires pyridoxal 5'-phosphate as cofactor.

The enzyme catalyses (1S,2R)-1-C-(indol-3-yl)glycerol 3-phosphate + L-serine = D-glyceraldehyde 3-phosphate + L-tryptophan + H2O. Its pathway is amino-acid biosynthesis; L-tryptophan biosynthesis; L-tryptophan from chorismate: step 5/5. The polypeptide is Tryptophan synthase (trp2) (Schizosaccharomyces pombe (strain 972 / ATCC 24843) (Fission yeast)).